The following is a 316-amino-acid chain: HPr kinase/phosphorylase (316 aa).

Residues His-141 and Lys-162 contribute to the active site. 156 to 163 (GESGVGKS) is a binding site for ATP. Ser-163 lines the Mg(2+) pocket. The active-site Proton acceptor; for phosphorylation activity. Proton donor; for dephosphorylation activity is the Asp-180. Residues 204 to 213 (MEIRGIGIID) are important for the catalytic mechanism of both phosphorylation and dephosphorylation. A Mg(2+)-binding site is contributed by Glu-205. Arg-246 is a catalytic residue. Residues 267–272 (PVKVGR) are important for the catalytic mechanism of dephosphorylation.

Belongs to the HPrK/P family. In terms of assembly, homohexamer. It depends on Mg(2+) as a cofactor.

The enzyme catalyses [HPr protein]-L-serine + ATP = [HPr protein]-O-phospho-L-serine + ADP + H(+). It carries out the reaction [HPr protein]-O-phospho-L-serine + phosphate + H(+) = [HPr protein]-L-serine + diphosphate. Its function is as follows. Catalyzes the ATP- as well as the pyrophosphate-dependent phosphorylation of a specific serine residue in HPr, a phosphocarrier protein of the phosphoenolpyruvate-dependent sugar phosphotransferase system (PTS). HprK/P also catalyzes the pyrophosphate-producing, inorganic phosphate-dependent dephosphorylation (phosphorolysis) of seryl-phosphorylated HPr (P-Ser-HPr). The two antagonistic activities of HprK/P are regulated by several intracellular metabolites, which change their concentration in response to the absence or presence of rapidly metabolisable carbon sources (glucose, fructose, etc.) in the growth medium. Therefore, by controlling the phosphorylation state of HPr, HPrK/P is a sensor enzyme that plays a major role in the regulation of carbon metabolism and sugar transport: it mediates carbon catabolite repression (CCR), and regulates PTS-catalyzed carbohydrate uptake and inducer exclusion. The polypeptide is HPr kinase/phosphorylase (Lactobacillus delbrueckii subsp. bulgaricus (strain ATCC 11842 / DSM 20081 / BCRC 10696 / JCM 1002 / NBRC 13953 / NCIMB 11778 / NCTC 12712 / WDCM 00102 / Lb 14)).